Consider the following 75-residue polypeptide: Dermaseptin-DA2 (75 aa).

Residues M1 to C22 form the signal peptide. Residues E23–E42 constitute a propeptide that is removed on maturation.

This sequence belongs to the frog skin active peptide (FSAP) family. Dermaseptin subfamily. As to expression, expressed by the skin glands.

It is found in the secreted. Its function is as follows. Possesses a potent antimicrobial activity against Gram-positive and Gram-negative bacteria. Probably acts by disturbing membrane functions with its amphipathic structure. This is Dermaseptin-DA2 from Agalychnis dacnicolor (Giant Mexican leaf frog).